A 62-amino-acid chain; its full sequence is U10-hottentoxin-Hj2a (62 aa).

The N-terminal stretch at 1-22 is a signal peptide; that stretch reads MQKLLIILILFCILKFNVDVEG. 3 disulfide bridges follow: Cys-28-Cys-46, Cys-33-Cys-59, and Cys-37-Cys-61.

It belongs to the short scorpion toxin superfamily. Potassium channel inhibitor family. Alpha-KTx 23 subfamily. Expressed by the venom gland.

The protein resides in the secreted. Its function is as follows. May block potassium channels. This chain is U10-hottentoxin-Hj2a, found in Hottentotta judaicus (Black scorpion).